A 448-amino-acid chain; its full sequence is Putative sodium-coupled neutral amino acid transporter 11 (448 aa).

A disordered region spans residues 1-20; it reads MESERSCLLSSHDAGKGGSS. 11 helical membrane passes run 22–42, 52–72, 94–114, 143–163, 165–185, 200–220, 246–266, 286–306, 324–344, 346–366, and 389–409; these read VSSASFNFINSIIGSGIIGLP, MGLLLLILVAFITDYSIILLV, IGYIIVSVLQFLYPFIAMISY, FVIAMSTVLFTLPLSLYRDIA, LGKVSLLSMILTFGILMTVVV, AWVFARWNAIQAVAVMSFALI, ISVGSSVLVSAVFAAAGYATF, TFGRFCYGVSIITTFPLECFV, SSHVIITLVIISATTAISLSY, CLGIVLELNGILSAVPLMFIF, and MILVAGVFVMIIGLIMMALFP. N425, N440, and N444 each carry an N-linked (GlcNAc...) asparagine glycan.

Belongs to the amino acid/polyamine transporter 2 family.

The protein resides in the membrane. In terms of biological role, putative sodium-dependent amino acid/proton antiporter. The chain is Putative sodium-coupled neutral amino acid transporter 11 (slc38a11) from Danio rerio (Zebrafish).